The primary structure comprises 109 residues: Large ribosomal subunit protein uL22 (109 aa).

Belongs to the universal ribosomal protein uL22 family. As to quaternary structure, part of the 50S ribosomal subunit.

In terms of biological role, this protein binds specifically to 23S rRNA; its binding is stimulated by other ribosomal proteins, e.g. L4, L17, and L20. It is important during the early stages of 50S assembly. It makes multiple contacts with different domains of the 23S rRNA in the assembled 50S subunit and ribosome. Functionally, the globular domain of the protein is located near the polypeptide exit tunnel on the outside of the subunit, while an extended beta-hairpin is found that lines the wall of the exit tunnel in the center of the 70S ribosome. In Paraburkholderia xenovorans (strain LB400), this protein is Large ribosomal subunit protein uL22.